The following is a 347-amino-acid chain: GMP reductase (347 aa).

Ala108–Ala131 contacts NADP(+). K(+) is bound by residues Gly181 and Gly183. Cys186 (thioimidate intermediate) is an active-site residue. An NADP(+)-binding site is contributed by Ile216 to Val239.

The protein belongs to the IMPDH/GMPR family. GuaC type 1 subfamily. In terms of assembly, homotetramer.

The catalysed reaction is IMP + NH4(+) + NADP(+) = GMP + NADPH + 2 H(+). In terms of biological role, catalyzes the irreversible NADPH-dependent deamination of GMP to IMP. It functions in the conversion of nucleobase, nucleoside and nucleotide derivatives of G to A nucleotides, and in maintaining the intracellular balance of A and G nucleotides. This is GMP reductase from Shigella boydii serotype 4 (strain Sb227).